The following is a 185-amino-acid chain: Ribosome-recycling factor (185 aa).

The protein belongs to the RRF family.

Its subcellular location is the cytoplasm. Its function is as follows. Responsible for the release of ribosomes from messenger RNA at the termination of protein biosynthesis. May increase the efficiency of translation by recycling ribosomes from one round of translation to another. The chain is Ribosome-recycling factor from Pseudarthrobacter chlorophenolicus (strain ATCC 700700 / DSM 12829 / CIP 107037 / JCM 12360 / KCTC 9906 / NCIMB 13794 / A6) (Arthrobacter chlorophenolicus).